The primary structure comprises 121 residues: Succinate dehydrogenase assembly factor 3, mitochondrial (121 aa).

A mitochondrion-targeting transit peptide spans 1–35 (MRPSLVRLVRPRRPERKTSPILPPLKLYKALLRAH).

This sequence belongs to the complex I LYR family. SDHAF3 subfamily. In terms of assembly, interacts with the iron-sulfur protein subunit within the SDH catalytic dimer.

It is found in the mitochondrion matrix. Functionally, plays an essential role in the assembly of succinate dehydrogenase (SDH), an enzyme complex (also referred to as respiratory complex II) that is a component of both the tricarboxylic acid (TCA) cycle and the mitochondrial electron transport chain, and which couples the oxidation of succinate to fumarate with the reduction of ubiquinone (coenzyme Q) to ubiquinol. Promotes maturation of the iron-sulfur protein subunit of the SDH catalytic dimer, protecting it from the deleterious effects of oxidants. May act together with SDHAF1. The protein is Succinate dehydrogenase assembly factor 3, mitochondrial of Debaryomyces hansenii (strain ATCC 36239 / CBS 767 / BCRC 21394 / JCM 1990 / NBRC 0083 / IGC 2968) (Yeast).